The sequence spans 588 residues: Zeta-carotene desaturase, chloroplastic/chromoplastic (588 aa).

A chloroplast and chromoplast-targeting transit peptide spans M1–R49.

This sequence belongs to the zeta carotene desaturase family. As to quaternary structure, monomer and dimer. Requires decylplastoquinone as cofactor. The cofactor is 6-decylubiquinone.

The protein localises to the plastid. The protein resides in the chloroplast. Its subcellular location is the chromoplast. The enzyme catalyses 9,9'-di-cis-zeta-carotene + 2 a quinone = 7,7',9,9'-tetra-cis-lycopene + 2 a quinol. It participates in carotenoid biosynthesis; lycopene biosynthesis. Functionally, catalyzes the conversion of zeta-carotene to lycopene via the intermediary of neurosporene. It carries out two consecutive desaturations (introduction of double bonds) at positions C-7 and C-7'. Shows stereoselectivity toward trans C15-C15'zeta-carotene double bond. The zeta-carotene produced by the phytoene desaturase PDS has a C15-C15' double bond in the cis configuration and it requires isomerization before being recognized as substrate by ZDS. No activity with all-trans-zeta-carotene. The main product is 7,9,7',9'-tetra-cis-lycopene (pro-lycopene). The protein is Zeta-carotene desaturase, chloroplastic/chromoplastic (ZDS) of Capsicum annuum (Capsicum pepper).